The primary structure comprises 593 residues: MGKIQELSPELINQIAAGEVIESAHSVVKELMENSMDASATQVDVESKDGGLSLLRITDNGTGIEPEDLEPALKRHATSKIQDYKDLESVLSYGFRGEALASIASVSRLTLESGTKEQKTAWKTRSVAGKISEKEEIPGFIGTKILVEELFFNTPVRRKFLKSIRSEDKKIRDRVTTQALAREDVRFRLFQDGKEVFVLPTRENKKERIIDLFGENFRDHLLEVSLERGGIQATGYISDPDFYKSNRTGQFIFINGRPIEIKYSSVLLKKAYDELLPPNGHPYCFLFFEIDPSRVDVNVHPAKREIRFLDEDGFNGFFLALIQKELRSSTPVSFLELKKRLLKPAPETHSTTSFYQARSSGKNPLLGRELFSGVSKQEGFELDRMGPGVSLSELTDERVKHSSFVPKKHFGVLFETFILAEAEDGFYIIDQHTAHERIRYEEVLRKLEKRNYGIQPLLTPIRIDVSKQEQEDILNRKKEYEEVGIFLDPLGEDSIVLREIPAYMEPGQEKEIVLDFLNRTEGKETSEPELYDLMAKCVACRSAIKKGDQLSDPILAEILNRLSYCENPSRCPHGRPTLVKLSRDDLERMFHRK.

The protein belongs to the DNA mismatch repair MutL/HexB family.

Its function is as follows. This protein is involved in the repair of mismatches in DNA. It is required for dam-dependent methyl-directed DNA mismatch repair. May act as a 'molecular matchmaker', a protein that promotes the formation of a stable complex between two or more DNA-binding proteins in an ATP-dependent manner without itself being part of a final effector complex. The chain is DNA mismatch repair protein MutL from Leptospira interrogans serogroup Icterohaemorrhagiae serovar copenhageni (strain Fiocruz L1-130).